Here is a 435-residue protein sequence, read N- to C-terminus: Type A flavoprotein fprA (435 aa).

Residues 48–228 (ANGTTYNAYA…PFRSFVAQAL (181 aa)) form a zinc metallo-hydrolase region. His-98, Glu-100, Asp-102, His-167, Asp-186, and His-243 together coordinate Fe cation. A Flavodoxin-like domain is found at 276–415 (LLIFYVSAYG…EGRAFGRRLA (140 aa)).

This sequence in the N-terminal section; belongs to the zinc metallo-hydrolase group 3 family. As to quaternary structure, homodimer. It depends on FMN as a cofactor. Fe cation is required as a cofactor.

In terms of biological role, low-potential electron donor to a number of redox enzymes. The protein is Type A flavoprotein fprA (fprA) of Rhodobacter capsulatus (strain ATCC BAA-309 / NBRC 16581 / SB1003).